The primary structure comprises 158 residues: Phosphopantetheine adenylyltransferase (158 aa).

Threonine 10 is a substrate binding site. ATP contacts are provided by residues 10–11 (TF) and histidine 18. Substrate-binding residues include lysine 42, leucine 74, and arginine 88. Residues 89-91 (GLR), glutamate 99, and 124-130 (NSFISST) contribute to the ATP site.

It belongs to the bacterial CoaD family. As to quaternary structure, homohexamer. It depends on Mg(2+) as a cofactor.

The protein localises to the cytoplasm. The catalysed reaction is (R)-4'-phosphopantetheine + ATP + H(+) = 3'-dephospho-CoA + diphosphate. It functions in the pathway cofactor biosynthesis; coenzyme A biosynthesis; CoA from (R)-pantothenate: step 4/5. In terms of biological role, reversibly transfers an adenylyl group from ATP to 4'-phosphopantetheine, yielding dephospho-CoA (dPCoA) and pyrophosphate. This is Phosphopantetheine adenylyltransferase from Shewanella sediminis (strain HAW-EB3).